Reading from the N-terminus, the 429-residue chain is Histidine--tRNA ligase (429 aa).

This sequence belongs to the class-II aminoacyl-tRNA synthetase family. In terms of assembly, homodimer.

The protein localises to the cytoplasm. It carries out the reaction tRNA(His) + L-histidine + ATP = L-histidyl-tRNA(His) + AMP + diphosphate + H(+). The chain is Histidine--tRNA ligase from Corynebacterium efficiens (strain DSM 44549 / YS-314 / AJ 12310 / JCM 11189 / NBRC 100395).